Consider the following 92-residue polypeptide: Large ribosomal subunit protein eL43 (92 aa).

The C4-type zinc-finger motif lies at 39-60; the sequence is CDFCGKYGMKRKAVGIWSCKGC.

It belongs to the eukaryotic ribosomal protein eL43 family.

The polypeptide is Large ribosomal subunit protein eL43 (RPL37a) (Ostreococcus lucimarinus (strain CCE9901)).